A 435-amino-acid polypeptide reads, in one-letter code: Methylenetetrahydrofolate--tRNA-(uracil-5-)-methyltransferase TrmFO (435 aa).

An FAD-binding site is contributed by 7–12; it reads GAGLAG.

It belongs to the MnmG family. TrmFO subfamily. FAD is required as a cofactor.

Its subcellular location is the cytoplasm. It carries out the reaction uridine(54) in tRNA + (6R)-5,10-methylene-5,6,7,8-tetrahydrofolate + NADH + H(+) = 5-methyluridine(54) in tRNA + (6S)-5,6,7,8-tetrahydrofolate + NAD(+). The catalysed reaction is uridine(54) in tRNA + (6R)-5,10-methylene-5,6,7,8-tetrahydrofolate + NADPH + H(+) = 5-methyluridine(54) in tRNA + (6S)-5,6,7,8-tetrahydrofolate + NADP(+). Its function is as follows. Catalyzes the folate-dependent formation of 5-methyl-uridine at position 54 (M-5-U54) in all tRNAs. This chain is Methylenetetrahydrofolate--tRNA-(uracil-5-)-methyltransferase TrmFO, found in Thermotoga petrophila (strain ATCC BAA-488 / DSM 13995 / JCM 10881 / RKU-1).